The sequence spans 1059 residues: DNA (cytosine-5)-methyltransferase CMT1 (1059 aa).

Disordered stretches follow at residues 1–196 (MVPE…GALA) and 230–272 (CVGE…DEAR). Residues 29–41 (AEAEAVADLDEID) show a composition bias toward acidic residues. 3 stretches are compositionally biased toward basic and acidic residues: residues 42-79 (REMSRAESRKRQRRTAKEKPGARKGATEWKPEDVEKAA), 92-129 (REMPRPELRKRQRRTAKEKPSAHEGATEWKPEDVEKAA), and 147-157 (SRGKRQRGVEK). Residues 158–167 (VKRRTRKKTA) show a composition bias toward basic residues. Residues 252-262 (RRVEDSDDHFV) show a composition bias toward basic and acidic residues. The 125-residue stretch at 312–436 (EIYHLDDDVY…VAYSTFANLP (125 aa)) folds into the BAH domain. Residues 479–1017 (ASLLDLYSGC…YALGLAYRGE (539 aa)) form the SAM-dependent MTase C5-type domain. In terms of domain architecture, Chromo spans 584 to 649 (FDVEELLEIC…KGHKENILPL (66 aa)). Cys662 is an active-site residue.

Belongs to the class I-like SAM-binding methyltransferase superfamily. C5-methyltransferase family.

The protein localises to the nucleus. It carries out the reaction a 2'-deoxycytidine in DNA + S-adenosyl-L-methionine = a 5-methyl-2'-deoxycytidine in DNA + S-adenosyl-L-homocysteine + H(+). In terms of biological role, involved in CpXpG DNA methylation. May not play a major role in maintaining CpXpG methylation. In Oryza sativa subsp. japonica (Rice), this protein is DNA (cytosine-5)-methyltransferase CMT1.